Here is a 175-residue protein sequence, read N- to C-terminus: Isopentenyl-diphosphate Delta-isomerase (175 aa).

2 residues coordinate Mn(2+): His23 and His30. A Nudix hydrolase domain is found at 28–162; sequence TLHLAFCVFV…PLRYTPWFRR (135 aa). Cys65 is a catalytic residue. His67 contributes to the Mn(2+) binding site. Glu85 serves as a coordination point for Mg(2+). The Mn(2+) site is built by Glu111 and Glu113. Residue Glu113 is part of the active site.

Belongs to the IPP isomerase type 1 family. The cofactor is Mg(2+). Requires Mn(2+) as cofactor.

It localises to the cytoplasm. It carries out the reaction isopentenyl diphosphate = dimethylallyl diphosphate. The protein operates within isoprenoid biosynthesis; dimethylallyl diphosphate biosynthesis; dimethylallyl diphosphate from isopentenyl diphosphate: step 1/1. Functionally, catalyzes the 1,3-allylic rearrangement of the homoallylic substrate isopentenyl (IPP) to its highly electrophilic allylic isomer, dimethylallyl diphosphate (DMAPP). The polypeptide is Isopentenyl-diphosphate Delta-isomerase (Halorhodospira halophila (strain DSM 244 / SL1) (Ectothiorhodospira halophila (strain DSM 244 / SL1))).